A 542-amino-acid chain; its full sequence is Formate--tetrahydrofolate ligase (542 aa).

ATP is bound at residue 53–60; it reads TPAGEGKT.

This sequence belongs to the formate--tetrahydrofolate ligase family.

The catalysed reaction is (6S)-5,6,7,8-tetrahydrofolate + formate + ATP = (6R)-10-formyltetrahydrofolate + ADP + phosphate. It functions in the pathway one-carbon metabolism; tetrahydrofolate interconversion. The polypeptide is Formate--tetrahydrofolate ligase (Thermotoga petrophila (strain ATCC BAA-488 / DSM 13995 / JCM 10881 / RKU-1)).